The following is a 951-amino-acid chain: Metal transporter CNNM1 (951 aa).

Residues 23–43 form a helical membrane-spanning segment; that stretch reads AVLLLFFSLSPRPPAAAAWLL. The segment at 114–138 is disordered; that stretch reads GAGGAAPSAVPTRPPGPQRCREQSD. One can recognise a CNNM transmembrane domain in the interval 218–414; sequence LLPPAWLRAL…DPYSDLVKEE (197 aa). Helical transmembrane passes span 222–242, 282–302, and 319–339; these read AWLR…FSGL, LLCT…GWLY, and AGVH…FLGA. CBS domains are found at residues 433–495 and 502–568; these read LTPL…CTPL and YNRP…ILDE. 2 stretches are compositionally biased toward polar residues: residues 731-740 and 814-824; these read SRCSGLNRSE and KAPTTRGTPQT. 2 disordered regions span residues 731 to 754 and 795 to 830; these read SRCS…GSNT and MDSS…DDPV. Phosphothreonine occurs at positions 821 and 824. A Phosphoserine modification is found at Ser850. The disordered stretch occupies residues 903 to 951; it reads DPEASPCSSDSEENMGKKLLRTLSGRKRKKSADGERASEENSNLTPLIT. Residues 920–932 are compositionally biased toward basic residues; it reads KLLRTLSGRKRKK. A compositionally biased stretch (polar residues) spans 942–951; that stretch reads ENSNLTPLIT.

Belongs to the ACDP family. As to expression, predominantly expressed in brain and testis, and, at lower levels, in kidney. In the brain, expressed in hippocampal neurons (at protein level).

It localises to the cell membrane. Its function is as follows. Probable metal transporter. The sequence is that of Metal transporter CNNM1 (Cnnm1) from Mus musculus (Mouse).